A 265-amino-acid polypeptide reads, in one-letter code: MADS-box protein JOINTLESS (265 aa).

The 55-residue stretch at 3-57 (REKIQIKKIDNSTARQVTFSKRRRGLFKKAEELSVLCDADVALIIFSSTGKLFDY) folds into the MADS-box domain. Residues 87–177 (QLVENSNYSR…RQQVMEISNN (91 aa)) enclose the K-box domain. The segment at 196–232 (ENGFNNNNNEDGQSSESVTNPCNSIDPPPQDDDSSDT) is disordered. Positions 205–218 (EDGQSSESVTNPCN) are enriched in polar residues.

Widely expressed with highest levels in shoot tips and axillary buds. Also found in fully developed pedicels and flowers.

The protein localises to the nucleus. Functionally, putative transcription factor that coordinates gene expression underlying the differentiation of the pedicel abscission zone. May also be involved in the maintenance of the inflorescence meristem state. The protein is MADS-box protein JOINTLESS (J) of Solanum lycopersicum (Tomato).